The chain runs to 254 residues: Type III pantothenate kinase (254 aa).

6–13 (DVGNSNIV) serves as a coordination point for ATP. Residues Y100 and 107–110 (GADR) contribute to the substrate site. D109 functions as the Proton acceptor in the catalytic mechanism. A K(+)-binding site is contributed by D129. Position 132 (T132) interacts with ATP. T184 contacts substrate.

It belongs to the type III pantothenate kinase family. Homodimer. Requires NH4(+) as cofactor. The cofactor is K(+).

The protein localises to the cytoplasm. The enzyme catalyses (R)-pantothenate + ATP = (R)-4'-phosphopantothenate + ADP + H(+). Its pathway is cofactor biosynthesis; coenzyme A biosynthesis; CoA from (R)-pantothenate: step 1/5. Its function is as follows. Catalyzes the phosphorylation of pantothenate (Pan), the first step in CoA biosynthesis. This is Type III pantothenate kinase from Pelobacter propionicus (strain DSM 2379 / NBRC 103807 / OttBd1).